Reading from the N-terminus, the 459-residue chain is Chromosomal replication initiator protein DnaA (459 aa).

The domain I, interacts with DnaA modulators stretch occupies residues 1–74; it reads MQKIETFWYF…DEMAQGHFNE (74 aa). Residues 74–122 form a domain II region; the sequence is EKIHFKLELKDPAEIKTATIKAPEPKSKEDKKPPTDKAHGTTARKTNPS. The tract at residues 91–123 is disordered; that stretch reads ATIKAPEPKSKEDKKPPTDKAHGTTARKTNPSR. Positions 96–112 are enriched in basic and acidic residues; it reads PEPKSKEDKKPPTDKAH. Residues 123-339 form a domain III, AAA+ region region; sequence RLNPAFTFDA…GALKRVLAYS (217 aa). Gly167, Gly169, Lys170, and Thr171 together coordinate ATP. The segment at 340 to 459 is domain IV, binds dsDNA; the sequence is RFTGHPISLD…YSTLIHILRG (120 aa).

This sequence belongs to the DnaA family. In terms of assembly, oligomerizes as a right-handed, spiral filament on DNA at oriC.

It is found in the cytoplasm. Plays an essential role in the initiation and regulation of chromosomal replication. ATP-DnaA binds to the origin of replication (oriC) to initiate formation of the DNA replication initiation complex once per cell cycle. Binds the DnaA box (a 9 base pair repeat at the origin) and separates the double-stranded (ds)DNA. Forms a right-handed helical filament on oriC DNA; dsDNA binds to the exterior of the filament while single-stranded (ss)DNA is stabiized in the filament's interior. The ATP-DnaA-oriC complex binds and stabilizes one strand of the AT-rich DNA unwinding element (DUE), permitting loading of DNA polymerase. After initiation quickly degrades to an ADP-DnaA complex that is not apt for DNA replication. Binds acidic phospholipids. This is Chromosomal replication initiator protein DnaA from Nitrosomonas eutropha (strain DSM 101675 / C91 / Nm57).